Here is a 257-residue protein sequence, read N- to C-terminus: Acyl-[acyl-carrier-protein]--UDP-N-acetylglucosamine O-acyltransferase (257 aa).

It belongs to the transferase hexapeptide repeat family. LpxA subfamily. As to quaternary structure, homotrimer.

The protein resides in the cytoplasm. It carries out the reaction a (3R)-hydroxyacyl-[ACP] + UDP-N-acetyl-alpha-D-glucosamine = a UDP-3-O-[(3R)-3-hydroxyacyl]-N-acetyl-alpha-D-glucosamine + holo-[ACP]. The protein operates within glycolipid biosynthesis; lipid IV(A) biosynthesis; lipid IV(A) from (3R)-3-hydroxytetradecanoyl-[acyl-carrier-protein] and UDP-N-acetyl-alpha-D-glucosamine: step 1/6. In terms of biological role, involved in the biosynthesis of lipid A, a phosphorylated glycolipid that anchors the lipopolysaccharide to the outer membrane of the cell. The sequence is that of Acyl-[acyl-carrier-protein]--UDP-N-acetylglucosamine O-acyltransferase from Anaeromyxobacter sp. (strain Fw109-5).